Consider the following 296-residue polypeptide: Heme oxygenase 1 (296 aa).

At 1–273 (METSQPHNAE…RMQADMLTTS (273 aa)) the chain is on the cytoplasmic side. Heme b contacts are provided by lysine 21, histidine 28, tyrosine 137, and arginine 186. The disordered stretch occupies residues 231–264 (GHAVQPKAELRTRSVNKSHENSPAAGKESERTSR). The span at 238-250 (AELRTRSVNKSHE) shows a compositional bias: basic and acidic residues. Residues 274-296 (PLVRWLLALGFIATTVAVGLFAM) traverse the membrane as a helical; Anchor for type IV membrane protein segment.

This sequence belongs to the heme oxygenase family. In terms of assembly, homodimer and higher order homooligomer. Oligomerization is crucial for its stability and function in the endoplasmic reticulum. In terms of processing, a soluble form arises by proteolytic removal of the membrane anchor.

It is found in the endoplasmic reticulum membrane. The catalysed reaction is heme b + 3 reduced [NADPH--hemoprotein reductase] + 3 O2 = biliverdin IXalpha + CO + Fe(2+) + 3 oxidized [NADPH--hemoprotein reductase] + 3 H2O + H(+). With respect to regulation, inhibited by metalloporphyrins in the following order of decreasing potency: tin mesoporphyrin &gt; tin protoporphyrin &gt; zinc protoporphyrin &gt; manganese protoporphyrin &gt; cobalt protoporphyrin. Its function is as follows. Catalyzes the oxidative cleavage of heme at the alpha-methene bridge carbon, released as carbon monoxide (CO), to generate biliverdin IXalpha, while releasing the central heme iron chelate as ferrous iron. Affords protection against programmed cell death and this cytoprotective effect relies on its ability to catabolize free heme and prevent it from sensitizing cells to undergo apoptosis. In terms of biological role, catalyzes the oxidative cleavage of heme at the alpha-methene bridge carbon, released as carbon monoxide (CO), to generate biliverdin IXalpha, while releasing the central heme iron chelate as ferrous iron. The sequence is that of Heme oxygenase 1 (HMOX1) from Gallus gallus (Chicken).